Consider the following 366-residue polypeptide: Flagellar P-ring protein (366 aa).

The signal sequence occupies residues 1–23; it reads MRTLKIFALAVSLLSMLAAPVQA.

The protein belongs to the FlgI family. In terms of assembly, the basal body constitutes a major portion of the flagellar organelle and consists of four rings (L,P,S, and M) mounted on a central rod.

It localises to the periplasm. The protein resides in the bacterial flagellum basal body. In terms of biological role, assembles around the rod to form the L-ring and probably protects the motor/basal body from shearing forces during rotation. This chain is Flagellar P-ring protein, found in Idiomarina loihiensis (strain ATCC BAA-735 / DSM 15497 / L2-TR).